The following is a 141-amino-acid chain: uncharacterized protein (141 aa).

This is an uncharacterized protein from Methanocaldococcus jannaschii (strain ATCC 43067 / DSM 2661 / JAL-1 / JCM 10045 / NBRC 100440) (Methanococcus jannaschii).